A 441-amino-acid chain; its full sequence is Ribulose bisphosphate carboxylase large chain (441 aa).

N6,N6,N6-trimethyllysine is present on lysine 4. Substrate is bound by residues asparagine 113 and threonine 163. Lysine 165 acts as the Proton acceptor in catalysis. Lysine 167 lines the substrate pocket. The Mg(2+) site is built by lysine 191, aspartate 193, and glutamate 194. Residue lysine 191 is modified to N6-carboxylysine. Catalysis depends on histidine 284, which acts as the Proton acceptor. Substrate contacts are provided by arginine 285, histidine 317, and serine 369.

The protein belongs to the RuBisCO large chain family. Type I subfamily. Heterohexadecamer of 8 large chains and 8 small chains; disulfide-linked. The disulfide link is formed within the large subunit homodimers. Mg(2+) serves as cofactor. The disulfide bond which can form in the large chain dimeric partners within the hexadecamer appears to be associated with oxidative stress and protein turnover.

It localises to the plastid. The protein localises to the chloroplast. The enzyme catalyses 2 (2R)-3-phosphoglycerate + 2 H(+) = D-ribulose 1,5-bisphosphate + CO2 + H2O. It carries out the reaction D-ribulose 1,5-bisphosphate + O2 = 2-phosphoglycolate + (2R)-3-phosphoglycerate + 2 H(+). Its function is as follows. RuBisCO catalyzes two reactions: the carboxylation of D-ribulose 1,5-bisphosphate, the primary event in carbon dioxide fixation, as well as the oxidative fragmentation of the pentose substrate in the photorespiration process. Both reactions occur simultaneously and in competition at the same active site. The sequence is that of Ribulose bisphosphate carboxylase large chain from Darlingtonia californica (California pitcher plant).